Here is a 237-residue protein sequence, read N- to C-terminus: Chaplin-B (237 aa).

The signal sequence occupies residues 1–26 (MRRVTRNGVLAVAASGALAVTMPAYA). In terms of domain architecture, Chaplin 1 spans 42 to 82 (SPGLISGNTVQLPVDVPVDVCGNTVNVVGLLNPAAGNGCAD). Disordered regions lie at residues 81 to 127 (ADSG…LSGN) and 148 to 216 (GIGN…TLAG). Positions 101–115 (GSATEATSGGAAAEG) are enriched in low complexity. A Chaplin 2 domain is found at 120-160 (SPGVLSGNGVQLPVHLPVNVSGNSVNVVGIGNPAVGNESTN). Residues 169–178 (VRPPAEPEPS) are compositionally biased toward pro residues. An LPXTG sorting signal motif is present at residues 202–206 (LAHTG). Position 205 is a pentaglycyl murein peptidoglycan amidated threonine (Thr205). The propeptide at 206 to 237 (GTDRTLPTLAGGAALVLGGTVLYRRFRPGSGD) is removed by sortase.

It belongs to the chaplin family. Long chaplin subfamily.

It is found in the secreted. It localises to the cell wall. Functionally, one of 8 partially redundant surface-active proteins required for efficient formation of aerial mycelium; the short chaplins assemble into a hydrophobic, amyloidal fibrillar surface layer that envelopes and protects aerial hyphae and spores, presumably anchored to the long chaplins. Chaplins have an overlapping function with the surface-active SapB peptide; chaplins are essential on minimal medium while on rich medium both chaplins and SapB are required for efficient aerial hyphae formation. The long chaplins (ChpA, ChpB, ChpC) are not absolutely necessary for short chaplin localization or rodlet formation, but probably play a role in initiating aerial hyphae development. Chaplins are also involved in cell attachment to a hydrophobic surface. This Streptomyces coelicolor (strain ATCC BAA-471 / A3(2) / M145) protein is Chaplin-B.